The following is a 432-amino-acid chain: ATP-dependent RNA helicase SUB2 (432 aa).

Positions 1–17 are enriched in acidic residues; it reads MSAEGQEELLDYSDSEE. Positions 1–35 are disordered; that stretch reads MSAEGQEELLDYSDSEEIAVPSNAPEAGADGADKD. Residues 48–76 carry the Q motif motif; it reads TGFRDFLLKPELLRAIGDCGFEHPSEVQQ. One can recognise a Helicase ATP-binding domain in the interval 79 to 254; the sequence is IPQSILGTDV…KKFMQNPLEI (176 aa). Position 92–99 (92–99) interacts with ATP; it reads AKSGLGKT. Residues 201 to 204 carry the DEAD box motif; it reads DECD. The Helicase C-terminal domain maps to 266 to 427; it reads GLQQYYLKLD…EFPEEGVDSS (162 aa).

The protein belongs to the DEAD box helicase family. DECD subfamily.

It is found in the nucleus. It carries out the reaction ATP + H2O = ADP + phosphate + H(+). In terms of biological role, ATP-binding RNA helicase involved in transcription elongation and required for the export of mRNA out of the nucleus. SUB2 also plays a role in pre-mRNA splicing and spliceosome assembly. May be involved in rDNA and telomeric silencing, and maintenance of genome integrity. The polypeptide is ATP-dependent RNA helicase SUB2 (SUB2) (Meyerozyma guilliermondii (strain ATCC 6260 / CBS 566 / DSM 6381 / JCM 1539 / NBRC 10279 / NRRL Y-324) (Yeast)).